Reading from the N-terminus, the 230-residue chain is RNA chaperone ProQ (230 aa).

The tract at residues 106-181 is disordered; that stretch reads AKARVQAQRA…EERHTPVSDI (76 aa). Basic and acidic residues predominate over residues 146–155; that stretch reads RRKDNAERKP. The segment covering 158-167 has biased composition (low complexity); the sequence is AKPAAAAKPS.

Belongs to the ProQ family.

It localises to the cytoplasm. RNA chaperone with significant RNA binding, RNA strand exchange and RNA duplexing activities. May regulate ProP activity through an RNA-based, post-transcriptional mechanism. The sequence is that of RNA chaperone ProQ from Cronobacter sakazakii (strain ATCC BAA-894) (Enterobacter sakazakii).